The chain runs to 100 residues: Eukaryotic translation initiation factor 4E-binding protein 3 (100 aa).

Positions 40 to 46 (YDRKFLL) match the YXXXXLphi motif motif. A disordered region spans residues 81 to 100 (LKEQETEEEIPDDAQFEMDI). A compositionally biased stretch (acidic residues) spans 85-100 (ETEEEIPDDAQFEMDI). The TOS motif signature appears at 96 to 100 (FEMDI).

Belongs to the eIF4E-binding protein family. Interacts with EIF4E. Interacts with RPA2 (in unphosphorylated form via N-terminus); the interaction enhances EIF4EBP3-mediated inhibition of EIF4E-mediated mRNA nuclear export. Post-translationally, phosphorylated. In terms of tissue distribution, expression is highest in skeletal muscle, heart, kidney, and pancreas, whereas there is very little expression in brain and thymus.

The protein localises to the cytoplasm. It is found in the nucleus. Repressor of translation initiation that regulates EIF4E activity by preventing its assembly into the eIF4F complex: the hypophosphorylated form competes with EIF4G1/EIF4G3 and strongly binds to EIF4E, leading to repression of translation. In contrast, the hyperphosphorylated form dissociates from EIF4E, allowing interaction between EIF4G1/EIF4G3 and EIF4E, leading to initiation of translation. Inhibits EIF4E-mediated mRNA nuclear export. In Homo sapiens (Human), this protein is Eukaryotic translation initiation factor 4E-binding protein 3 (EIF4EBP3).